Here is a 158-residue protein sequence, read N- to C-terminus: SsrA-binding protein (158 aa).

Residues 131–158 are disordered; it reads GKKTHDKRETEKKRDWNREKARLLRDRG. Residues 136 to 158 are compositionally biased toward basic and acidic residues; sequence DKRETEKKRDWNREKARLLRDRG.

It belongs to the SmpB family.

Its subcellular location is the cytoplasm. In terms of biological role, required for rescue of stalled ribosomes mediated by trans-translation. Binds to transfer-messenger RNA (tmRNA), required for stable association of tmRNA with ribosomes. tmRNA and SmpB together mimic tRNA shape, replacing the anticodon stem-loop with SmpB. tmRNA is encoded by the ssrA gene; the 2 termini fold to resemble tRNA(Ala) and it encodes a 'tag peptide', a short internal open reading frame. During trans-translation Ala-aminoacylated tmRNA acts like a tRNA, entering the A-site of stalled ribosomes, displacing the stalled mRNA. The ribosome then switches to translate the ORF on the tmRNA; the nascent peptide is terminated with the 'tag peptide' encoded by the tmRNA and targeted for degradation. The ribosome is freed to recommence translation, which seems to be the essential function of trans-translation. This is SsrA-binding protein from Brucella abortus biovar 1 (strain 9-941).